The following is a 277-amino-acid chain: Large ribosomal subunit protein uL2c (277 aa).

Residues 226–249 form a disordered region; sequence NPIDHPHGGGEGRAPIGREKPLTP. Residues 229 to 246 are compositionally biased toward basic and acidic residues; the sequence is DHPHGGGEGRAPIGREKP.

This sequence belongs to the universal ribosomal protein uL2 family. As to quaternary structure, part of the 50S ribosomal subunit.

The protein resides in the plastid. Its subcellular location is the chloroplast. In Physcomitrium patens (Spreading-leaved earth moss), this protein is Large ribosomal subunit protein uL2c (rpl2).